The primary structure comprises 541 residues: Membrane protein insertase YidC (541 aa).

The next 5 membrane-spanning stretches (helical) occupy residues Asn6–Asp26, Phe349–Phe369, Gly420–Leu440, Leu457–Met477, and Val500–Gly520.

Belongs to the OXA1/ALB3/YidC family. Type 1 subfamily. In terms of assembly, interacts with the Sec translocase complex via SecD. Specifically interacts with transmembrane segments of nascent integral membrane proteins during membrane integration.

The protein localises to the cell inner membrane. Functionally, required for the insertion and/or proper folding and/or complex formation of integral membrane proteins into the membrane. Involved in integration of membrane proteins that insert both dependently and independently of the Sec translocase complex, as well as at least some lipoproteins. Aids folding of multispanning membrane proteins. This Shewanella sp. (strain MR-7) protein is Membrane protein insertase YidC.